The following is a 691-amino-acid chain: Dynamin-1-like protein (691 aa).

One can recognise a Dynamin-type G domain in the interval 22 to 301 (IIQLPQIAVV…LMHHIRDCLP (280 aa)). Residues 32 to 39 (GTQSSGKS) are G1 motif. GTP is bound at residue 32–40 (GTQSSGKSS). Residues 58–60 (VTR) are G2 motif. A G3 motif region spans residues 145–148 (DLPG). The G4 motif stretch occupies residues 214–217 (TKLD). Residues 214-220 (TKLDLMD) and 245-248 (NRSQ) each bind GTP. The G5 motif stretch occupies residues 244–247 (VNRS). Residues 343-488 (YCNTIEGTAK…NEMVHNLVAI (146 aa)) form a middle domain region. Basic and acidic residues-rich tracts occupy residues 522-531 (LPTSVPRDKM) and 551-563 (KKGDEGQGEEKTK). The interval 522 to 573 (LPTSVPRDKMAGGAQAEQEGGTGTWRGMLKKGDEGQGEEKTKLQSSIPASPQ) is disordered. The GED domain occupies 599-690 (CEVIERLIKS…VIAEIRETHL (92 aa)). Residues 609–623 (YFLIVRKNIQDSVPK) form an important for homodimerization region.

It belongs to the TRAFAC class dynamin-like GTPase superfamily. Dynamin/Fzo/YdjA family. In terms of assembly, homotetramer; dimerizes through the N-terminal GTP-middle region of one molecule binding to the GED domain of another DNM1L molecule. Oligomerizes in a GTP-dependent manner to form membrane-associated tubules with a spiral pattern.

It is found in the cytoplasm. The protein localises to the cytosol. It localises to the golgi apparatus. Its subcellular location is the endomembrane system. The protein resides in the mitochondrion outer membrane. It is found in the peroxisome. The protein localises to the membrane. It localises to the clathrin-coated pit. Its subcellular location is the cytoplasmic vesicle. The protein resides in the secretory vesicle. It is found in the synaptic vesicle membrane. The enzyme catalyses GTP + H2O = GDP + phosphate + H(+). In terms of biological role, functions in mitochondrial and peroxisomal division. Mediates membrane fission through oligomerization into membrane-associated tubular structures that wrap around the scission site to constrict and sever the mitochondrial membrane through a GTP hydrolysis-dependent mechanism. The specific recruitment at scission sites is mediated by membrane receptors like MFF, MIEF1 and MIEF2 for mitochondrial membranes. While the recruitment by the membrane receptors is GTP-dependent, the following hydrolysis of GTP induces the dissociation from the receptors and allows DNM1L filaments to curl into closed rings that are probably sufficient to sever a double membrane. May play a role in the circadian control of mitochondrial ATP production. The polypeptide is Dynamin-1-like protein (Danio rerio (Zebrafish)).